A 299-amino-acid chain; its full sequence is Biotin transporter (299 aa).

Helical transmembrane passes span 2–22, 26–46, 56–76, 81–101, 110–130, 137–157, 172–192, 202–222, 233–253, and 256–276; these read ALLI…GEYL, VDSY…FLPF, TVGL…MLSF, YLTV…ITLI, LRWG…IIRY, FWTG…GMVG, AFAW…FLLG, LQWG…YFMW, TLGI…LAIW, and QPHW…LWVH. 2 consecutive EamA domains span residues 3 to 128 and 139 to 274; these read LLII…AGII and TGLL…ASLW.

This sequence belongs to the drug/metabolite transporter (DMT) superfamily. 10 TMS drug/metabolite exporter (DME) (TC 2.A.7.3) family.

It is found in the cell inner membrane. The catalysed reaction is biotin(in) = biotin(out). Functionally, uptake of biotin. This chain is Biotin transporter, found in Escherichia coli O157:H7.